The primary structure comprises 624 residues: Phragmoplastin DRP1E (624 aa).

Thr-2 is subject to N-acetylthreonine. The Dynamin-type G domain maps to 37 to 306; the sequence is WEALPTVAVV…LESVIRTRIP (270 aa). The interval 47–54 is G1 motif; that stretch reads GGQSSGKS. Residue 50–55 participates in GTP binding; the sequence is SSGKSS. Residues 73–75 are G2 motif; the sequence is VTR. The G3 motif stretch occupies residues 148 to 151; it reads DLPG. The tract at residues 217-220 is G4 motif; it reads TKLD. Residues 218–223 and 248–251 each bind GTP; these read KLDLMD and NRSQ. The interval 247–250 is G5 motif; the sequence is VNRS. One can recognise a GED domain in the interval 532–624; that stretch reads FRRIASNVSA…DEIDAVAWVR (93 aa).

Belongs to the TRAFAC class dynamin-like GTPase superfamily. Dynamin/Fzo/YdjA family. As to quaternary structure, forms homodimer and may homooligomerize and heterooligomerize to form the phragmoplastin complex. Binds to PHIP1. As to expression, ubiquitous.

The protein resides in the cytoplasm. It is found in the cytoskeleton. Its subcellular location is the phragmoplast. It carries out the reaction GTP + H2O = GDP + phosphate + H(+). Its function is as follows. Microtubule-associated force-producing protein that is targeted to the tubulo-vesicular network of the forming cell plate during cytokinesis. Also plays a major role in plasma membrane maintenance and cell wall integrity with an implication in vesicular trafficking, polar cell expansion, and other aspects of plant growth and development. Has a GTPase activity. This chain is Phragmoplastin DRP1E, found in Arabidopsis thaliana (Mouse-ear cress).